The sequence spans 666 residues: E3 ubiquitin-protein ligase MBR2 (666 aa).

Polar residues-rich tracts occupy residues 1–14 (MQGP…STGI), 23–35 (CSTN…NNIL), 42–58 (FPNN…ASSS), and 73–88 (SSSR…SNGS). Disordered stretches follow at residues 1 to 58 (MQGP…ASSS), 73 to 95 (SSSR…RQLL), 155 to 179 (SLGS…GLGS), 221 to 329 (SSLS…DGQP), 400 to 433 (NPST…TPHN), and 457 to 491 (GASL…RQRR). Residues 221–239 (SSLSLSMPSQNSPNVNNQS) are compositionally biased toward low complexity. 3 stretches are compositionally biased toward polar residues: residues 258-268 (AFPSTRSTETI), 286-303 (FSFT…QLPA), and 414-433 (GSSS…TPHN). The RING-type; atypical zinc finger occupies 619 to 660 (CCVCQEEYAEGDDLGTLGCGHEFHTACVKQWLMLKNLCPICK).

The protein belongs to the RING-type zinc finger family. As to quaternary structure, interacts with MED25 and UBC11.

It catalyses the reaction S-ubiquitinyl-[E2 ubiquitin-conjugating enzyme]-L-cysteine + [acceptor protein]-L-lysine = [E2 ubiquitin-conjugating enzyme]-L-cysteine + N(6)-ubiquitinyl-[acceptor protein]-L-lysine.. The protein operates within protein modification; protein ubiquitination. In terms of biological role, E3 ubiquitin-protein ligase that functions as a regulator of MED25 stability by targeting MED25 for degradation in a RING-H2-dependent way. Proteasome-dependent degradation of MED25 seems to activate its function as positive regulator of FLOWERING LOCUS T (FT) and is important to induce the expression of FT and consequently to promote flowering. May function downstream of HAL3 and be required for HAL3-regulated plant growth. Activation of MBR2 by HAL3 may lead to the degradation of cell cycle suppressors, resulting in enhancement of cell division and plant growth. The protein is E3 ubiquitin-protein ligase MBR2 (MBR2) of Arabidopsis thaliana (Mouse-ear cress).